We begin with the raw amino-acid sequence, 233 residues long: Short chain dehydrogenase trt9 (233 aa).

Asp-33, Arg-95, Tyr-127, Lys-131, and Val-160 together coordinate NADP(+). Tyr-127 functions as the Proton donor in the catalytic mechanism. Catalysis depends on Lys-131, which acts as the Lowers pKa of active site Tyr.

This sequence belongs to the short-chain dehydrogenases/reductases (SDR) family.

The protein operates within secondary metabolite biosynthesis; terpenoid biosynthesis. Short chain dehydrogenase; part of the gene cluster that mediates the biosynthesis of terretonin, a fungal meroterpenoid that acts as a mycotoxin. The first step of the pathway is the synthesis of 3,5-dimethylorsellinic acid (DMOA) by the polyketide synthase trt4. DMOA is then prenylated into farnesyl-DMOA by the polyprenyl transferase trt2. Methylation by the methyltransferase trt5 then leads to farnesyl-DMOA methyl ester which is further subject to epoxidation by the FAD-dependent monooxygenase trt8 to yield epoxyfarnesyl-DMOA methyl ester. Cyclization of epoxyfarnesyl-DMOA methyl ester by the terpene cyclase trt1 leads to a tetracycle intermediate which is in turn converted to preterretonin. Dehydrogenase trt9 comes next to transform preterretonin to preterrenoid. The FAD-dependent monooxygenase trt3 is then required for the C-hydroxylation at C16 of preterrenoid to yield terrenoid. The cytochrome P450 trt6 catalyzes three successive oxidations to transform terrenoid into an unstable intermediate, which then undergoes the D-ring expansion and unusual rearrangement of the methoxy group to afford the core skeleton of terretonin. Trt14 catalyzes the D-ring expansion of terretonin involving intramolecular methoxy rearrangement as well as the hydrolysis of the expanded D-ring and the methyl ester moiety. Finally, the nonheme iron-dependent dioxygenase trt7 accomplishes the last two oxidation reactions steps to complete the biosynthesis of terretonin. Terretonin C is produced via spontaneous decarboxylation of the terretonin precursor. Another shunt product of the terretonin biosynthesis is dihydrofarnesyl-DMOA, derived from epoxyfarnesyl-DMOA through hydrolysis of the epoxide. The polypeptide is Short chain dehydrogenase trt9 (Aspergillus terreus (strain NIH 2624 / FGSC A1156)).